The primary structure comprises 178 residues: UPF0232 protein cgR_0005 (178 aa).

The tract at residues 16 to 55 is disordered; the sequence is AMRRNGSVPDLNKNDAFRRPPAPKGGVEKRKKGRASGLDG.

Belongs to the UPF0232 family.

The protein is UPF0232 protein cgR_0005 of Corynebacterium glutamicum (strain R).